A 144-amino-acid polypeptide reads, in one-letter code: D-aminoacyl-tRNA deacylase (144 aa).

The Gly-cisPro motif, important for rejection of L-amino acids motif lies at 136 to 137 (GP).

Belongs to the DTD family. As to quaternary structure, homodimer.

It is found in the cytoplasm. It catalyses the reaction glycyl-tRNA(Ala) + H2O = tRNA(Ala) + glycine + H(+). The catalysed reaction is a D-aminoacyl-tRNA + H2O = a tRNA + a D-alpha-amino acid + H(+). An aminoacyl-tRNA editing enzyme that deacylates mischarged D-aminoacyl-tRNAs. Also deacylates mischarged glycyl-tRNA(Ala), protecting cells against glycine mischarging by AlaRS. Acts via tRNA-based rather than protein-based catalysis; rejects L-amino acids rather than detecting D-amino acids in the active site. By recycling D-aminoacyl-tRNA to D-amino acids and free tRNA molecules, this enzyme counteracts the toxicity associated with the formation of D-aminoacyl-tRNA entities in vivo and helps enforce protein L-homochirality. The sequence is that of D-aminoacyl-tRNA deacylase from Haemophilus ducreyi (strain 35000HP / ATCC 700724).